The following is an 86-amino-acid chain: Small ribosomal subunit protein uS17 (86 aa).

The protein belongs to the universal ribosomal protein uS17 family. As to quaternary structure, part of the 30S ribosomal subunit.

Functionally, one of the primary rRNA binding proteins, it binds specifically to the 5'-end of 16S ribosomal RNA. The polypeptide is Small ribosomal subunit protein uS17 (Streptococcus equi subsp. equi (strain 4047)).